Reading from the N-terminus, the 931-residue chain is Isoleucine--tRNA ligase (931 aa).

Positions 58–68 (PYANGHLHCGH) match the 'HIGH' region motif. Glu-559 lines the L-isoleucyl-5'-AMP pocket. Residues 600-604 (KLSKS) carry the 'KMSKS' region motif. Lys-603 is an ATP binding site. Zn(2+) contacts are provided by Cys-894, Cys-897, Cys-914, and Cys-917.

It belongs to the class-I aminoacyl-tRNA synthetase family. IleS type 1 subfamily. In terms of assembly, monomer. Requires Zn(2+) as cofactor.

The protein resides in the cytoplasm. The catalysed reaction is tRNA(Ile) + L-isoleucine + ATP = L-isoleucyl-tRNA(Ile) + AMP + diphosphate. Functionally, catalyzes the attachment of isoleucine to tRNA(Ile). As IleRS can inadvertently accommodate and process structurally similar amino acids such as valine, to avoid such errors it has two additional distinct tRNA(Ile)-dependent editing activities. One activity is designated as 'pretransfer' editing and involves the hydrolysis of activated Val-AMP. The other activity is designated 'posttransfer' editing and involves deacylation of mischarged Val-tRNA(Ile). The chain is Isoleucine--tRNA ligase from Legionella pneumophila (strain Lens).